We begin with the raw amino-acid sequence, 577 residues long: Outer spore wall assembly protein SHE10 (577 aa).

The signal sequence occupies residues 1-23 (MGKLIKLITTLTVLVSLLQYCCE). 2 coiled-coil regions span residues 379–416 (NETR…ENVE) and 513–561 (ILRS…EEDV). Residues 525–545 (RERKERERKEREKAAAEEFQR) show a composition bias toward basic and acidic residues. A disordered region spans residues 525-577 (RERKERERKEREKAAAEEFQRQQELLLQQEEEDEEDVSYTSTSTITTTTTMTL). Low complexity predominate over residues 562–577 (SYTSTSTITTTTTMTL).

The protein belongs to the SHE10 family. In terms of assembly, component of the mitochondria-localized RNase mitochondrial RNA-processing (RNase MRP) composed of one single RNA encoded by the NME1 gene and at least 31 proteins. Absent in the nucleus-localized RNase MRP (NuMRP).

The protein resides in the mitochondrion. Its function is as follows. Involved in spore wall assembly. May be a component of the mitochondrial RNase MRP (MtMRP), a ribonucleoprotein endoribonuclease involved in the cleaving RNA transcripts to generate primers for DNA replication in mitochondria. The protein is Outer spore wall assembly protein SHE10 of Saccharomyces cerevisiae (strain RM11-1a) (Baker's yeast).